A 463-amino-acid polypeptide reads, in one-letter code: V-type proton ATPase subunit S1 (463 aa).

A signal peptide spans 1–32 (MMAATVVSRIRTGTRWAPVLWLLLSLVAVAAA). Residues 33-225 (VAAEQQVPLV…TAVRPSRVAR (193 aa)) constitute a propeptide that is removed on maturation. Residues 33–412 (VAAEQQVPLV…EQFSYASDCA (380 aa)) are Lumenal-facing. Asn-164, Asn-255, Asn-267, Asn-290, Asn-297, Asn-344, Asn-351, and Asn-399 each carry an N-linked (GlcNAc...) asparagine glycan. A helical membrane pass occupies residues 413 to 433 (GFFSPGIWMGLLTTLFMLFIF). The Cytoplasmic segment spans residues 434 to 463 (TYGLHMILSLKTMDRFDDRKGPTITLTQIV).

This sequence belongs to the vacuolar ATPase subunit S1 family. As to quaternary structure, accessory component of the multisubunit proton-transporting vacuolar (V)-ATPase protein pump. Interacts (via N-terminus) with ATP6AP2 (via N-terminus). Interacts with RNASEK. Interacts with TMEM106B (via C-terminus). Post-translationally, N-glycosylated. As to expression, expressed in brain (at protein level).

It localises to the endoplasmic reticulum membrane. It is found in the endoplasmic reticulum-Golgi intermediate compartment membrane. The protein resides in the cytoplasmic vesicle. Its subcellular location is the secretory vesicle. The protein localises to the synaptic vesicle membrane. It localises to the clathrin-coated vesicle membrane. Functionally, accessory subunit of the proton-transporting vacuolar (V)-ATPase protein pump, which is required for luminal acidification of secretory vesicles. Guides the V-type ATPase into specialized subcellular compartments, such as neuroendocrine regulated secretory vesicles or the ruffled border of the osteoclast, thereby regulating its activity. Involved in membrane trafficking and Ca(2+)-dependent membrane fusion. May play a role in the assembly of the V-type ATPase complex. In aerobic conditions, involved in intracellular iron homeostasis, thus triggering the activity of Fe(2+) prolyl hydroxylase (PHD) enzymes, and leading to HIF1A hydroxylation and subsequent proteasomal degradation. In islets of Langerhans cells, may regulate the acidification of dense-core secretory granules. The chain is V-type proton ATPase subunit S1 (Atp6ap1) from Rattus norvegicus (Rat).